A 238-amino-acid chain; its full sequence is CFA/I fimbrial subunit A (238 aa).

A signal peptide spans 1–19 (MHKLFYLLSLLMAPFVANA).

It is found in the fimbrium. Might function as a shuttle protein in the transport of fimbria through the periplasmic space or might function as an adhesin. This chain is CFA/I fimbrial subunit A (cfaA), found in Escherichia coli.